Here is a 393-residue protein sequence, read N- to C-terminus: MLKKTIRDVDIAGKRVFVRVDFNVPFNERGEVADDTRIRAVLPTIEYLLTGGAAVILASHLGRPKGKRDDRFSLRPVADRLSALTARQVRFAAEAVGPETEAASRELAPGDILLLENIRFYPEEEQNDPEFASRLAALADLYVNDAFGTAHRAHASTAGIAAHLPAVAGLLLERELDILGRLLSVPERPFVALIGGAKISDKIGVLERLIEKADYLLVGGGMANTFLAAQGHNLQASLVEADRLETARYLLAKAGPGERITLPIDLVVAPDREQPEKRATVAVESIPAGWAAFDLGSGTVRLYANRLRPARTIFWNGPVGLFEVPGFDRGTLDLARVIAAAEATTVVGGGDTVAAVKQAGVLDQVTHVSTGGGASLKLLEGRELPGVAVLQNR.

Substrate is bound by residues 21 to 23, Arg37, 60 to 63, Arg119, and Arg152; these read DFN and HLGR. ATP is bound by residues Lys202, Glu323, and 349–352; that span reads GGDT.

The protein belongs to the phosphoglycerate kinase family. As to quaternary structure, monomer.

Its subcellular location is the cytoplasm. It catalyses the reaction (2R)-3-phosphoglycerate + ATP = (2R)-3-phospho-glyceroyl phosphate + ADP. The protein operates within carbohydrate degradation; glycolysis; pyruvate from D-glyceraldehyde 3-phosphate: step 2/5. This Desulforudis audaxviator (strain MP104C) protein is Phosphoglycerate kinase.